The sequence spans 117 residues: Large ribosomal subunit protein eL22 (117 aa).

Phosphoserine is present on residues S49 and S50.

It belongs to the eukaryotic ribosomal protein eL22 family. Component of the large ribosomal subunit (LSU). Mature yeast ribosomes consist of a small (40S) and a large (60S) subunit. The 40S small subunit contains 1 molecule of ribosomal RNA (18S rRNA) and at least 33 different proteins. The large 60S subunit contains 3 rRNA molecules (25S, 5.8S and 5S rRNA) and at least 46 different proteins.

Its subcellular location is the cytoplasm. It is found in the nucleus. The protein resides in the nucleolus. Functionally, component of the ribosome, a large ribonucleoprotein complex responsible for the synthesis of proteins in the cell. The small ribosomal subunit (SSU) binds messenger RNAs (mRNAs) and translates the encoded message by selecting cognate aminoacyl-transfer RNA (tRNA) molecules. The large subunit (LSU) contains the ribosomal catalytic site termed the peptidyl transferase center (PTC), which catalyzes the formation of peptide bonds, thereby polymerizing the amino acids delivered by tRNAs into a polypeptide chain. The nascent polypeptides leave the ribosome through a tunnel in the LSU and interact with protein factors that function in enzymatic processing, targeting, and the membrane insertion of nascent chains at the exit of the ribosomal tunnel. In Schizosaccharomyces pombe (strain 972 / ATCC 24843) (Fission yeast), this protein is Large ribosomal subunit protein eL22 (rpl22).